The chain runs to 396 residues: Putative ribosomal RNA large subunit methyltransferase YwbD (396 aa).

One can recognise a PUA domain in the interval 1–79 (MKLLTLKKAH…KHEQIDQAFF (79 aa)).

It belongs to the methyltransferase superfamily. RlmI family.

The protein resides in the cytoplasm. This is Putative ribosomal RNA large subunit methyltransferase YwbD (ywbD) from Bacillus subtilis (strain 168).